The sequence spans 196 residues: ATP-dependent Clp protease proteolytic subunit (196 aa).

Residue serine 96 is the Nucleophile of the active site. Histidine 121 is an active-site residue.

Belongs to the peptidase S14 family. In terms of assembly, fourteen ClpP subunits assemble into 2 heptameric rings which stack back to back to give a disk-like structure with a central cavity, resembling the structure of eukaryotic proteasomes.

It is found in the cytoplasm. It carries out the reaction Hydrolysis of proteins to small peptides in the presence of ATP and magnesium. alpha-casein is the usual test substrate. In the absence of ATP, only oligopeptides shorter than five residues are hydrolyzed (such as succinyl-Leu-Tyr-|-NHMec, and Leu-Tyr-Leu-|-Tyr-Trp, in which cleavage of the -Tyr-|-Leu- and -Tyr-|-Trp bonds also occurs).. Its function is as follows. Cleaves peptides in various proteins in a process that requires ATP hydrolysis. Has a chymotrypsin-like activity. Plays a major role in the degradation of misfolded proteins. This Streptococcus suis (strain 98HAH33) protein is ATP-dependent Clp protease proteolytic subunit.